A 514-amino-acid polypeptide reads, in one-letter code: 23S rRNA (uracil(1939)-C(5))-methyltransferase RlmD (514 aa).

Positions 70, 76, 79, and 158 each coordinate [4Fe-4S] cluster. The S-adenosyl-L-methionine site is built by glutamine 272, phenylalanine 301, asparagine 306, glutamate 322, asparagine 350, and aspartate 371. The active-site Nucleophile is the cysteine 398.

The protein belongs to the class I-like SAM-binding methyltransferase superfamily. RNA M5U methyltransferase family. RlmD subfamily.

The catalysed reaction is uridine(1939) in 23S rRNA + S-adenosyl-L-methionine = 5-methyluridine(1939) in 23S rRNA + S-adenosyl-L-homocysteine + H(+). Its function is as follows. Catalyzes the formation of 5-methyl-uridine at position 1939 (m5U1939) in 23S rRNA. The sequence is that of 23S rRNA (uracil(1939)-C(5))-methyltransferase RlmD from Chromobacterium violaceum (strain ATCC 12472 / DSM 30191 / JCM 1249 / CCUG 213 / NBRC 12614 / NCIMB 9131 / NCTC 9757 / MK).